Consider the following 163-residue polypeptide: Cyclic pyranopterin monophosphate synthase (163 aa).

Substrate-binding positions include 75-77 and 115-116; these read MCH and ME. D130 is an active-site residue.

It belongs to the MoaC family. Homohexamer; trimer of dimers.

It catalyses the reaction (8S)-3',8-cyclo-7,8-dihydroguanosine 5'-triphosphate = cyclic pyranopterin phosphate + diphosphate. It participates in cofactor biosynthesis; molybdopterin biosynthesis. Functionally, catalyzes the conversion of (8S)-3',8-cyclo-7,8-dihydroguanosine 5'-triphosphate to cyclic pyranopterin monophosphate (cPMP). This Bacillus pumilus (strain SAFR-032) protein is Cyclic pyranopterin monophosphate synthase.